A 456-amino-acid chain; its full sequence is Gamma-glutamyl phosphate reductase (456 aa).

The protein belongs to the gamma-glutamyl phosphate reductase family.

Its subcellular location is the cytoplasm. It carries out the reaction L-glutamate 5-semialdehyde + phosphate + NADP(+) = L-glutamyl 5-phosphate + NADPH + H(+). It participates in amino-acid biosynthesis; L-proline biosynthesis; L-glutamate 5-semialdehyde from L-glutamate: step 2/2. Functionally, catalyzes the NADPH-dependent reduction of L-glutamate 5-phosphate into L-glutamate 5-semialdehyde and phosphate. The product spontaneously undergoes cyclization to form 1-pyrroline-5-carboxylate. This is Gamma-glutamyl phosphate reductase from Haloquadratum walsbyi (strain DSM 16790 / HBSQ001).